The sequence spans 473 residues: Hexaprenyl pyrophosphate synthase, mitochondrial (473 aa).

Residues Lys84, Arg87, and His186 each coordinate isopentenyl diphosphate. Asp193 and Asp197 together coordinate Mg(2+). Arg202 lines the an all-trans-polyprenyl diphosphate pocket. Isopentenyl diphosphate is bound at residue Arg203. Lys323, Thr324, Gln361, and Lys378 together coordinate an all-trans-polyprenyl diphosphate.

The protein belongs to the FPP/GGPP synthase family. The cofactor is Mg(2+).

The protein localises to the mitochondrion inner membrane. It functions in the pathway cofactor biosynthesis; ubiquinone biosynthesis. Its function is as follows. Assembly of polyisoprenoid side chains. The polyprenyl synthase of coenzyme Q biosynthesis catalyzes the formation from isopentenyl diphosphate of all trans-polyprenyl pyrophosphates generally ranging in length of between 6 and 10 isoprene units depending on the species. The polypeptide is Hexaprenyl pyrophosphate synthase, mitochondrial (COQ1) (Saccharomyces cerevisiae (strain ATCC 204508 / S288c) (Baker's yeast)).